The following is a 130-amino-acid chain: Small ribosomal subunit protein uS4 (130 aa).

N6-acetyllysine is present on Lys-64. Residue Lys-91 forms a Glycyl lysine isopeptide (Lys-Gly) (interchain with G-Cter in SUMO2) linkage. One can recognise an S4 RNA-binding domain in the interval 106 to 130; it reads RRLQTQVFKLGLAXSIHHXRVLIRQ. N6-acetyllysine is present on Lys-114.

It belongs to the universal ribosomal protein uS4 family. As to quaternary structure, component of the small ribosomal subunit. Identified in a IGF2BP1-dependent mRNP granule complex containing untranslated mRNAs. Part of the small subunit (SSU) processome, composed of more than 70 proteins and the RNA chaperone small nucleolar RNA (snoRNA) U3.

Its subcellular location is the cytoplasm. It localises to the nucleus. The protein localises to the nucleolus. Functionally, component of the small ribosomal subunit. The ribosome is a large ribonucleoprotein complex responsible for the synthesis of proteins in the cell. Part of the small subunit (SSU) processome, first precursor of the small eukaryotic ribosomal subunit. During the assembly of the SSU processome in the nucleolus, many ribosome biogenesis factors, an RNA chaperone and ribosomal proteins associate with the nascent pre-rRNA and work in concert to generate RNA folding, modifications, rearrangements and cleavage as well as targeted degradation of pre-ribosomal RNA by the RNA exosome. This is Small ribosomal subunit protein uS4 (RPS9) from Sus scrofa (Pig).